The chain runs to 109 residues: Cytochrome c6 (109 aa).

A signal peptide spans M1–S25. C39, C42, H43, and M83 together coordinate heme c.

It belongs to the cytochrome c family. PetJ subfamily. Monomer. Post-translationally, binds 1 heme c group covalently per subunit.

Its subcellular location is the plastid. It localises to the chloroplast thylakoid lumen. Functionally, functions as an electron carrier between membrane-bound cytochrome b6-f and photosystem I in oxygenic photosynthesis. This chain is Cytochrome c6 (petJ), found in Cyanidium caldarium (Red alga).